Here is a 645-residue protein sequence, read N- to C-terminus: DNA ligase (645 aa).

Residues 30-34 (DDEYD), 79-80 (SM), and E106 contribute to the NAD(+) site. The active-site N6-AMP-lysine intermediate is the K108. NAD(+) is bound by residues R129, E163, and K302. Residues C396, C399, C412, and C417 each contribute to the Zn(2+) site. Residues 570–645 (LKTNIFSGKT…IDESEYESLK (76 aa)) form the BRCT domain.

This sequence belongs to the NAD-dependent DNA ligase family. LigA subfamily. Mg(2+) serves as cofactor. It depends on Mn(2+) as a cofactor.

The catalysed reaction is NAD(+) + (deoxyribonucleotide)n-3'-hydroxyl + 5'-phospho-(deoxyribonucleotide)m = (deoxyribonucleotide)n+m + AMP + beta-nicotinamide D-nucleotide.. In terms of biological role, DNA ligase that catalyzes the formation of phosphodiester linkages between 5'-phosphoryl and 3'-hydroxyl groups in double-stranded DNA using NAD as a coenzyme and as the energy source for the reaction. It is essential for DNA replication and repair of damaged DNA. The sequence is that of DNA ligase from Campylobacter fetus subsp. fetus (strain 82-40).